A 158-amino-acid chain; its full sequence is Transcription elongation factor GreA (158 aa).

It belongs to the GreA/GreB family.

Necessary for efficient RNA polymerase transcription elongation past template-encoded arresting sites. The arresting sites in DNA have the property of trapping a certain fraction of elongating RNA polymerases that pass through, resulting in locked ternary complexes. Cleavage of the nascent transcript by cleavage factors such as GreA or GreB allows the resumption of elongation from the new 3'terminus. GreA releases sequences of 2 to 3 nucleotides. This is Transcription elongation factor GreA from Baumannia cicadellinicola subsp. Homalodisca coagulata.